The primary structure comprises 153 residues: Gamma-glutamylaminecyclotransferase (153 aa).

Residue 7–10 (YGTL) coordinates substrate. The Proton acceptor role is filled by Glu-82. Residues 130 to 153 (QLPHHDSYDSEGPHGLRYNPRENR) form a disordered region. The segment covering 132–153 (PHHDSYDSEGPHGLRYNPRENR) has biased composition (basic and acidic residues).

This sequence belongs to the gamma-glutamylcyclotransferase family. Monomer.

It carries out the reaction epsilon-(gamma-L-glutamyl)-L-lysine = 5-oxo-L-proline + L-lysine. Its function is as follows. Contributes to degradation of proteins cross-linked by transglutaminases by degrading the cross-link between a lysine and a glutamic acid residue. Catalyzes the formation of 5-oxo-L-proline from L-gamma-glutamyl-L-epsilon-lysine. Inactive with L-gamma-glutamyl-alpha-amino acid substrates such as L-gamma-glutamyl-L-alpha-cysteine and L-gamma-glutamyl-L-alpha-alanine. The sequence is that of Gamma-glutamylaminecyclotransferase (GGACT) from Homo sapiens (Human).